We begin with the raw amino-acid sequence, 157 residues long: Putative 4-hydroxy-4-methyl-2-oxoglutarate aldolase (157 aa).

Substrate contacts are provided by residues 78–81 (GDVI) and arginine 100. Position 101 (aspartate 101) interacts with a divalent metal cation.

Belongs to the class II aldolase/RraA-like family. As to quaternary structure, homotrimer. A divalent metal cation is required as a cofactor.

It carries out the reaction 4-hydroxy-4-methyl-2-oxoglutarate = 2 pyruvate. The catalysed reaction is oxaloacetate + H(+) = pyruvate + CO2. Catalyzes the aldol cleavage of 4-hydroxy-4-methyl-2-oxoglutarate (HMG) into 2 molecules of pyruvate. Also contains a secondary oxaloacetate (OAA) decarboxylase activity due to the common pyruvate enolate transition state formed following C-C bond cleavage in the retro-aldol and decarboxylation reactions. This Mycobacterium leprae (strain Br4923) protein is Putative 4-hydroxy-4-methyl-2-oxoglutarate aldolase.